A 271-amino-acid chain; its full sequence is Energy-coupling factor transporter ATP-binding protein EcfA (271 aa).

One can recognise an ABC transporter domain in the interval 2-231 (ISIQNLTFYY…PLFLQQYKLT (230 aa)). Residue 34 to 41 (GHNGSGKS) participates in ATP binding.

The protein belongs to the ABC transporter superfamily. Energy-coupling factor EcfA family. Forms a stable energy-coupling factor (ECF) transporter complex composed of 2 membrane-embedded substrate-binding proteins (S component), 2 ATP-binding proteins (A component) and 2 transmembrane proteins (T component).

The protein resides in the cell membrane. ATP-binding (A) component of a common energy-coupling factor (ECF) ABC-transporter complex. Unlike classic ABC transporters this ECF transporter provides the energy necessary to transport a number of different substrates. The chain is Energy-coupling factor transporter ATP-binding protein EcfA from Aster yellows witches'-broom phytoplasma (strain AYWB).